A 245-amino-acid polypeptide reads, in one-letter code: Ubiquinone/menaquinone biosynthesis C-methyltransferase UbiE (245 aa).

S-adenosyl-L-methionine-binding positions include threonine 71, aspartate 92, and 118 to 119 (DA).

Belongs to the class I-like SAM-binding methyltransferase superfamily. MenG/UbiE family.

The enzyme catalyses a 2-demethylmenaquinol + S-adenosyl-L-methionine = a menaquinol + S-adenosyl-L-homocysteine + H(+). It catalyses the reaction a 2-methoxy-6-(all-trans-polyprenyl)benzene-1,4-diol + S-adenosyl-L-methionine = a 5-methoxy-2-methyl-3-(all-trans-polyprenyl)benzene-1,4-diol + S-adenosyl-L-homocysteine + H(+). It participates in quinol/quinone metabolism; menaquinone biosynthesis; menaquinol from 1,4-dihydroxy-2-naphthoate: step 2/2. It functions in the pathway cofactor biosynthesis; ubiquinone biosynthesis. In terms of biological role, methyltransferase required for the conversion of demethylmenaquinol (DMKH2) to menaquinol (MKH2) and the conversion of 2-polyprenyl-6-methoxy-1,4-benzoquinol (DDMQH2) to 2-polyprenyl-3-methyl-6-methoxy-1,4-benzoquinol (DMQH2). The sequence is that of Ubiquinone/menaquinone biosynthesis C-methyltransferase UbiE from Neisseria meningitidis serogroup A / serotype 4A (strain DSM 15465 / Z2491).